The sequence spans 120 residues: Chaperonin GroEL (120 aa).

Residue 23 to 27 participates in ATP binding; it reads DGTTT.

Belongs to the chaperonin (HSP60) family. In terms of assembly, forms a cylinder of 14 subunits composed of two heptameric rings stacked back-to-back. Interacts with the co-chaperonin GroES.

It localises to the cytoplasm. The enzyme catalyses ATP + H2O + a folded polypeptide = ADP + phosphate + an unfolded polypeptide.. Together with its co-chaperonin GroES, plays an essential role in assisting protein folding. The GroEL-GroES system forms a nano-cage that allows encapsulation of the non-native substrate proteins and provides a physical environment optimized to promote and accelerate protein folding. This is Chaperonin GroEL from Mycolicibacterium vaccae (Mycobacterium vaccae).